Consider the following 78-residue polypeptide: Translational regulator CsrA (78 aa).

Belongs to the CsrA/RsmA family. As to quaternary structure, homodimer; the beta-strands of each monomer intercalate to form a hydrophobic core, while the alpha-helices form wings that extend away from the core.

The protein resides in the cytoplasm. A translational regulator that binds mRNA to regulate translation initiation and/or mRNA stability. Usually binds in the 5'-UTR at or near the Shine-Dalgarno sequence preventing ribosome-binding, thus repressing translation. Its main target seems to be the major flagellin gene, while its function is anatagonized by FliW. This is Translational regulator CsrA from Oleidesulfovibrio alaskensis (strain ATCC BAA-1058 / DSM 17464 / G20) (Desulfovibrio alaskensis).